A 287-amino-acid chain; its full sequence is Protoheme IX farnesyltransferase (287 aa).

8 consecutive transmembrane segments (helical) span residues 9–29, 31–51, 94–114, 132–152, 158–178, 202–222, 228–248, and 267–287; these read IVTM…SATL, LIDW…AGAA, IILW…TWLI, VGAI…GGTL, WMLF…IAWL, AWQS…LAWF, VASA…WPLL, and LRWS…RASL.

This sequence belongs to the UbiA prenyltransferase family. Protoheme IX farnesyltransferase subfamily.

It is found in the cell inner membrane. It carries out the reaction heme b + (2E,6E)-farnesyl diphosphate + H2O = Fe(II)-heme o + diphosphate. It participates in porphyrin-containing compound metabolism; heme O biosynthesis; heme O from protoheme: step 1/1. Converts heme B (protoheme IX) to heme O by substitution of the vinyl group on carbon 2 of heme B porphyrin ring with a hydroxyethyl farnesyl side group. This is Protoheme IX farnesyltransferase from Rhodopirellula baltica (strain DSM 10527 / NCIMB 13988 / SH1).